We begin with the raw amino-acid sequence, 287 residues long: Bifunctional protein FolD (287 aa).

Residues 166–168 and Ile-232 each bind NADP(+); that span reads GAS.

The protein belongs to the tetrahydrofolate dehydrogenase/cyclohydrolase family. As to quaternary structure, homodimer.

It catalyses the reaction (6R)-5,10-methylene-5,6,7,8-tetrahydrofolate + NADP(+) = (6R)-5,10-methenyltetrahydrofolate + NADPH. It carries out the reaction (6R)-5,10-methenyltetrahydrofolate + H2O = (6R)-10-formyltetrahydrofolate + H(+). It participates in one-carbon metabolism; tetrahydrofolate interconversion. Its function is as follows. Catalyzes the oxidation of 5,10-methylenetetrahydrofolate to 5,10-methenyltetrahydrofolate and then the hydrolysis of 5,10-methenyltetrahydrofolate to 10-formyltetrahydrofolate. This is Bifunctional protein FolD from Chromohalobacter salexigens (strain ATCC BAA-138 / DSM 3043 / CIP 106854 / NCIMB 13768 / 1H11).